The sequence spans 66 residues: Sodium/potassium-transporting ATPase subunit gamma (66 aa).

A helical transmembrane segment spans residues 29–46 (GGLIFAGLAFVVGLLILL).

Belongs to the FXYD family. In terms of assembly, regulatory subunit of the sodium/potassium-transporting ATPase which is composed of a catalytic alpha subunit, an auxiliary non-catalytic beta subunit and an additional regulatory subunit. In terms of tissue distribution, highest levels expressed in the kidney and spleen. Restricted to the basolateral membrane in renal epithelial cells and varies in its level of expression along the nephron.

Its subcellular location is the membrane. Functionally, may be involved in forming the receptor site for cardiac glycoside binding or may modulate the transport function of the sodium ATPase. The protein is Sodium/potassium-transporting ATPase subunit gamma (Fxyd2) of Rattus norvegicus (Rat).